Reading from the N-terminus, the 259-residue chain is Phosphate import ATP-binding protein PstB (259 aa).

Positions 5–248 constitute an ABC transporter domain; that stretch reads IDVSGLHVYY…NKIFTKPEKK (244 aa). Residue 37–44 participates in ATP binding; the sequence is GSSGCGKS.

Belongs to the ABC transporter superfamily. Phosphate importer (TC 3.A.1.7) family. The complex is composed of two ATP-binding proteins (PstB), two transmembrane proteins (PstC and PstA) and a solute-binding protein (PstS).

The protein localises to the cell membrane. The enzyme catalyses phosphate(out) + ATP + H2O = ADP + 2 phosphate(in) + H(+). In terms of biological role, part of the ABC transporter complex PstSACB involved in phosphate import. Responsible for energy coupling to the transport system. The chain is Phosphate import ATP-binding protein PstB from Thermobifida fusca (strain YX).